Here is a 367-residue protein sequence, read N- to C-terminus: MTNPRVFFEVAIGGKTIGKIYFELFADKVPKTAENFRALCTGEKGNTQAGIPLHFKGSSFHRVIKDFMVQGGDFTAGNGTGGESIYGEKFPDEAFPYPHDQPFLLSMANAGPNTNGSQFFITTTETPHLDNKHVVFGKLLSGKGIVRQIERTETGEQDRPKQPVTIVDCGELPADFQVPVGNVDDGTGDDYEDFLKDNDNVDVNDPASVLGAIEKLKSIGTKLFKEGNAEGALKKYLKATTYLEDYLPDDLSEENIAKVHALRISCYLNVALMALKVNQPKVAIKAATSALDDETVANKEKAKALFRRGSGYAALKNETDALKDLNAALELEPADGAIKNKIEEVKQAAQRRREAEKKKYAGFFGGK.

Residues Phe-7 to Glu-171 form the PPIase cyclophilin-type domain. TPR repeat units lie at residues Ile-213–Tyr-246, Ile-264–Ala-297, and Ala-302–Asp-335.

Belongs to the cyclophilin-type PPIase family. PPIase D subfamily.

It localises to the cytoplasm. The catalysed reaction is [protein]-peptidylproline (omega=180) = [protein]-peptidylproline (omega=0). Functionally, PPIases accelerate the folding of proteins. It catalyzes the cis-trans isomerization of proline imidic peptide bonds in oligopeptides. This chain is Peptidyl-prolyl cis-trans isomerase D (CPR6), found in Yarrowia lipolytica (strain CLIB 122 / E 150) (Yeast).